Here is a 912-residue protein sequence, read N- to C-terminus: Microtubule-associated protein 10 (912 aa).

6 disordered regions span residues Val31 to Arg50, Lys209 to Pro239, Gly254 to Thr296, Ala335 to Gly366, Ser443 to Ser469, and Arg730 to Tyr859. A compositionally biased stretch (polar residues) spans Val211–Ser229. Residues Gly254–Ser263 are compositionally biased toward basic and acidic residues. The segment covering Thr266–Gly295 has biased composition (polar residues). The span at Glu347 to Asn362 shows a compositional bias: low complexity. Positions Cys452–Lys468 are enriched in basic and acidic residues. Positions Ser735–Leu768 are enriched in polar residues. Residues Glu796–Trp807 are compositionally biased toward low complexity. The segment covering Gly841–Tyr859 has biased composition (polar residues).

Interacts (via middle region) with microtubules.

It is found in the cytoplasm. The protein resides in the cytoskeleton. The protein localises to the spindle pole. Its subcellular location is the microtubule organizing center. It localises to the centrosome. It is found in the midbody. Microtubule-associated protein (MAP) that plays a role in the regulation of cell division; promotes microtubule stability and participates in the organization of the spindle midzone and normal progress of cytokinesis. This chain is Microtubule-associated protein 10 (MAP10), found in Bos taurus (Bovine).